Consider the following 251-residue polypeptide: HTH-type transcriptional regulator UlaR (251 aa).

Residues 3 to 58 (EAQRHQILLDMLAQLGFVTVENVIERLGISPATARRDINKLDESGKLKKVRNGAEA) enclose the HTH deoR-type domain. The H-T-H motif DNA-binding region spans 20–39 (VTVENVIERLGISPATARRD).

It is found in the cytoplasm. Its function is as follows. Represses ulaG and the ulaABCDEF operon. This is HTH-type transcriptional regulator UlaR from Salmonella agona (strain SL483).